The sequence spans 128 residues: Small ribosomal subunit protein uS11 (128 aa).

Belongs to the universal ribosomal protein uS11 family. Part of the 30S ribosomal subunit. Interacts with proteins S7 and S18. Binds to IF-3.

In terms of biological role, located on the platform of the 30S subunit, it bridges several disparate RNA helices of the 16S rRNA. Forms part of the Shine-Dalgarno cleft in the 70S ribosome. The chain is Small ribosomal subunit protein uS11 from Onion yellows phytoplasma (strain OY-M).